We begin with the raw amino-acid sequence, 590 residues long: Type I inositol polyphosphate 5-phosphatase 1 (590 aa).

A disordered region spans residues 47–73 (DYSADSDDDYEDRSQEFDPISSGVTNP). The span at 48 to 57 (YSADSDDDYE) shows a compositional bias: acidic residues. Ser-60 is modified (phosphoserine). 2 catalytic regions span residues 445 to 460 (ERII…INLS) and 523 to 538 (GKRR…WNGK).

The protein belongs to the inositol polyphosphate 5-phosphatase family. Expressed ubiquitously.

It catalyses the reaction 1D-myo-inositol 1,4,5-trisphosphate + H2O = 1D-myo-inositol 1,4-bisphosphate + phosphate. The enzyme catalyses 1D-myo-inositol 1,3,4,5-tetrakisphosphate + H2O = 1D-myo-inositol 1,3,4-trisphosphate + phosphate. Its function is as follows. Has phosphatase activity toward Ins(1,4,5)P3 and Ins(1,3,4,5)P4, but not toward Ins(1,4)P2, Ins(1)P. Seems to be involved in the abscisic acid (ABA) signaling pathway. Could also be able to hydrolyze PtdIns(4,5)P2 and PtdIns(3,4,5)P3. This is Type I inositol polyphosphate 5-phosphatase 1 from Arabidopsis thaliana (Mouse-ear cress).